A 398-amino-acid polypeptide reads, in one-letter code: Calcium-binding and coiled-coil domain-containing protein 2 (398 aa).

A CLIR motif is present at residues 133-136 (ILVV). The stretch at 137-301 (TTQGEVEEIE…RENSRLLSYM (165 aa)) forms a coiled coil. The LIR-like signature appears at 203–206 (DYWE). The segment at 314 to 341 (TSDEGGAGQNPGLVYGNPYSGIQESSSP) is disordered. Positions 323 to 333 (NPGLVYGNPYS) are interaction with LGALS8. Residues 347-398 (KKCPICKADDICDHTLEQQQMQALCLNCPICDKIFPATEKQIFEDHVFCHSL) form an interaction with MYO6 region. The UBZ1-type zinc finger occupies 371–396 (CLNCPICDKIFPATEKQIFEDHVFCH). 4 residues coordinate Zn(2+): Cys374, Cys377, His392, and His396. A Phosphoserine modification is found at Ser397.

This sequence belongs to the CALCOCO family. As to quaternary structure, dimer. Part of a complex consisting of CALCOCO2, TAX1BP1 and MYO6. Interacts with MYO6. Interacts with GEMIN4. Interacts with ATG8 family members MAP1LC3A, MAP1LC3B, GABARAP, GABARAPL1 and GABARAPL2. Interacts with ATG8 family member MAP1LC3C. Interacts with LGALS8. Interacts with TOM1; the interaction is indirect and is mediated by MYO6, which acts as a bridge between TOM1 and CALCOCO2. Interacts with AZI2.

It localises to the cytoplasm. The protein localises to the perinuclear region. The protein resides in the cytoskeleton. Its subcellular location is the cytoplasmic vesicle. It is found in the autophagosome membrane. In terms of biological role, xenophagy-specific receptor required for autophagy-mediated intracellular bacteria degradation. Acts as an effector protein of galectin-sensed membrane damage that restricts the proliferation of infecting pathogens upon entry into the cytosol by targeting LGALS8-associated bacteria for autophagy. Initially orchestrates bacteria targeting to autophagosomes and subsequently ensures pathogen degradation by regulating pathogen-containing autophagosome maturation. Bacteria targeting to autophagosomes relies on its interaction with MAP1LC3A, MAP1LC3B and/or GABARAPL2, whereas regulation of pathogen-containing autophagosome maturation requires the interaction with MAP3LC3C. May play a role in ruffle formation and actin cytoskeleton organization and seems to negatively regulate constitutive secretion. The sequence is that of Calcium-binding and coiled-coil domain-containing protein 2 from Macaca fascicularis (Crab-eating macaque).